A 540-amino-acid chain; its full sequence is Cobalt-factor III methyltransferase (540 aa).

[4Fe-4S] cluster contacts are provided by C402, C405, C439, and C443.

The protein in the N-terminal section; belongs to the precorrin methyltransferase family. Requires [4Fe-4S] cluster as cofactor.

The enzyme catalyses Co(II)-factor III + AH2 + S-adenosyl-L-methionine = Co-precorrin-4 + A + S-adenosyl-L-homocysteine. Its pathway is cofactor biosynthesis; adenosylcobalamin biosynthesis. Functionally, methyltransferase that catalyzes the reduction, ring contraction and methylation of C-17 in cobalt-factor III to form cobalt-precorrin-4. Is also able to convert cobalt-precorrin-3 to cobalt-precorrin-4. The polypeptide is Cobalt-factor III methyltransferase (cbiH60) (Priestia megaterium (Bacillus megaterium)).